The chain runs to 89 residues: Small ribosomal subunit protein uS14 (89 aa).

The protein belongs to the universal ribosomal protein uS14 family. As to quaternary structure, part of the 30S ribosomal subunit. Contacts proteins S3 and S10.

Binds 16S rRNA, required for the assembly of 30S particles and may also be responsible for determining the conformation of the 16S rRNA at the A site. This is Small ribosomal subunit protein uS14 from Leuconostoc mesenteroides subsp. mesenteroides (strain ATCC 8293 / DSM 20343 / BCRC 11652 / CCM 1803 / JCM 6124 / NCDO 523 / NBRC 100496 / NCIMB 8023 / NCTC 12954 / NRRL B-1118 / 37Y).